The chain runs to 245 residues: Outer dense fiber protein 1 (245 aa).

Phosphoserine is present on residues Ser5 and Ser10. Repeat 1 spans residues 34-38 (RCLCD). The segment at 34 to 78 (RCLCDLYMHPYCCCDLHPYPYCLCYSKRSRSCGLCDLYYPCCLCD) is 2 X 5 AA repeats of [RC]-C-L-C-D. Residue Ser64 is modified to Phosphoserine. Repeat 2 spans residues 74 to 78 (CCLCD). 7 positions are modified to phosphoserine: Ser87, Ser108, Ser109, Ser137, Ser153, Ser175, and Ser180. Residues 195–233 (CNPCNPCSPCSPCGPCGPCGPCGPCGPCGPCDPCNPCYP) are C-X-P repeat region.

In terms of assembly, interacts (via leucine zipper motif) with TCP11. Interacts with SPAG4. Interacts with KLC3. Interacts with CCDC42. In terms of tissue distribution, testis. Specifically located to the round spermatid layer and to the luminally-oriented cytoplasm of elongated spermatids.

It localises to the cell projection. The protein localises to the cilium. The protein resides in the flagellum. Its subcellular location is the cytoplasm. It is found in the cytoskeleton. It localises to the microtubule organizing center. The protein localises to the centrosome. Component of the outer dense fibers (ODF) of spermatozoa. ODF are filamentous structures located on the outside of the axoneme in the midpiece and principal piece of the mammalian sperm tail and may help to maintain the passive elastic structures and elastic recoil of the sperm tail. The protein is Outer dense fiber protein 1 (Odf1) of Rattus norvegicus (Rat).